The chain runs to 449 residues: Signal recognition particle protein (449 aa).

Residues 109 to 116 (GLQGSGKT), 191 to 195 (DTAGR), and 249 to 252 (SRID) contribute to the GTP site.

This sequence belongs to the GTP-binding SRP family. SRP54 subfamily. Part of the signal recognition particle protein translocation system, which is composed of SRP and FtsY. SRP is a ribonucleoprotein composed of Ffh and a 4.5S RNA molecule.

Its subcellular location is the cytoplasm. It catalyses the reaction GTP + H2O = GDP + phosphate + H(+). Functionally, involved in targeting and insertion of nascent membrane proteins into the cytoplasmic membrane. Binds to the hydrophobic signal sequence of the ribosome-nascent chain (RNC) as it emerges from the ribosomes. The SRP-RNC complex is then targeted to the cytoplasmic membrane where it interacts with the SRP receptor FtsY. Interaction with FtsY leads to the transfer of the RNC complex to the Sec translocase for insertion into the membrane, the hydrolysis of GTP by both Ffh and FtsY, and the dissociation of the SRP-FtsY complex into the individual components. This is Signal recognition particle protein from Rickettsia felis (strain ATCC VR-1525 / URRWXCal2) (Rickettsia azadi).